The primary structure comprises 571 residues: Putative diflavin flavoprotein A 1 (571 aa).

A zinc metallo-hydrolase region spans residues 43–236; sequence ENGTTYNSFL…PPVQLVATGH (194 aa). Fe cation-binding residues include H92, E94, D96, H159, D178, and H236. The region spanning 265–426 is the Flavodoxin-like domain; that stretch reads VAIFYAANYG…DLDKALGRLS (162 aa). The flavodoxin-reductase-like stretch occupies residues 427 to 571; it reads GGLYIITAQK…VHHRKVGNHY (145 aa).

This sequence in the N-terminal section; belongs to the zinc metallo-hydrolase group 3 family. It in the C-terminal section; belongs to the flavodoxin reductase family. Fe cation is required as a cofactor.

Its function is as follows. Mediates electron transfer from NADH to oxygen, reducing it to water. This modular protein has 3 redox cofactors, in other organisms the same activity requires 2 or 3 proteins. This Thermosynechococcus vestitus (strain NIES-2133 / IAM M-273 / BP-1) protein is Putative diflavin flavoprotein A 1 (dfa1).